The following is a 129-amino-acid chain: Glycine cleavage system H protein (129 aa).

The Lipoyl-binding domain occupies Leu-24–Arg-106. N6-lipoyllysine is present on Lys-65.

The protein belongs to the GcvH family. The glycine cleavage system is composed of four proteins: P, T, L and H. (R)-lipoate is required as a cofactor.

Functionally, the glycine cleavage system catalyzes the degradation of glycine. The H protein shuttles the methylamine group of glycine from the P protein to the T protein. The protein is Glycine cleavage system H protein of Parasynechococcus marenigrum (strain WH8102).